The following is a 103-amino-acid chain: MHVKKGDKVQVITGKDKGKQGVILVAFPKENRVIVEGVNIVKKHSKPSQLNPQGGIITKEAPIHVSNVMPLDPKTGEPTRVGYKVEDGKKVRIAKKSGELLDK.

The protein belongs to the universal ribosomal protein uL24 family. As to quaternary structure, part of the 50S ribosomal subunit.

In terms of biological role, one of two assembly initiator proteins, it binds directly to the 5'-end of the 23S rRNA, where it nucleates assembly of the 50S subunit. Its function is as follows. One of the proteins that surrounds the polypeptide exit tunnel on the outside of the subunit. The sequence is that of Large ribosomal subunit protein uL24 from Bacillus cytotoxicus (strain DSM 22905 / CIP 110041 / 391-98 / NVH 391-98).